The following is a 442-amino-acid chain: tRNA modification GTPase MnmE (442 aa).

Residues Arg22, Glu79, and Lys118 each contribute to the (6S)-5-formyl-5,6,7,8-tetrahydrofolate site. The 151-residue stretch at 215 to 365 (EIPIAIVGRP…LEKAILFEYQ (151 aa)) folds into the TrmE-type G domain. Asn225 contacts K(+). Residues 225 to 230 (NVGKSS), 244 to 250 (TNIEGTT), and 269 to 272 (DTAG) each bind GTP. Ser229 is a Mg(2+) binding site. Thr244, Ile246, and Thr249 together coordinate K(+). A Mg(2+)-binding site is contributed by Thr250. A (6S)-5-formyl-5,6,7,8-tetrahydrofolate-binding site is contributed by Lys442.

Belongs to the TRAFAC class TrmE-Era-EngA-EngB-Septin-like GTPase superfamily. TrmE GTPase family. In terms of assembly, homodimer. Heterotetramer of two MnmE and two MnmG subunits. K(+) serves as cofactor.

The protein localises to the cytoplasm. Functionally, exhibits a very high intrinsic GTPase hydrolysis rate. Involved in the addition of a carboxymethylaminomethyl (cmnm) group at the wobble position (U34) of certain tRNAs, forming tRNA-cmnm(5)s(2)U34. The chain is tRNA modification GTPase MnmE from Mycoplasmopsis pulmonis (strain UAB CTIP) (Mycoplasma pulmonis).